Consider the following 890-residue polypeptide: DNA mismatch repair protein MutS (890 aa).

ATP is bound at residue 607–614; sequence GPNMSGKS.

The protein belongs to the DNA mismatch repair MutS family.

This protein is involved in the repair of mismatches in DNA. It is possible that it carries out the mismatch recognition step. This protein has a weak ATPase activity. The chain is DNA mismatch repair protein MutS from Bacillus thuringiensis (strain Al Hakam).